The chain runs to 438 residues: POU domain, class 3, transcription factor 3-A (438 aa).

Disordered regions lie at residues 22-43 (VHSE…SVSG), 102-172 (SPWS…QSQQ), and 186-248 (GMLN…PTSD). Polar residues-rich tracts occupy residues 103-123 (PWSS…VKSS) and 146-159 (QSHQ…TASH). Residues 160–172 (ISTITGGQQQSQQ) show a composition bias toward low complexity. The span at 210–230 (HHHHHHHQQQHPHHHHHHQHH) shows a compositional bias: basic residues. One can recognise a POU-specific domain in the interval 242-316 (EDTPTSDDLE…LLNKWLEEAD (75 aa)). The segment at residues 334–393 (KRKKRTSIEVSVKGALESHFLKCPKPSAQEITSLADNLQLEKEVVRVWFCNRRQKEKRMT) is a DNA-binding region (homeobox).

This sequence belongs to the POU transcription factor family. Class-3 subfamily. As to expression, predominantly expressed in the embryonic and adult central nervous system. In adults, isoform 2 is expressed in the brain, ovary, basal cells of the skin and muscle satellite cells.

Its subcellular location is the nucleus. Functionally, transcription factor that may play important roles in patterning the embryonic brain. The protein is POU domain, class 3, transcription factor 3-A (pou3f3a) of Danio rerio (Zebrafish).